The sequence spans 336 residues: Dihydrolipoyl dehydrogenase (336 aa).

FAD contacts are provided by residues 34–42, K51, and G115; that span reads EKEVVGGIC. A disulfide bond links C42 and C47. NAD(+) contacts are provided by residues 180–184, E203, V237, and 264–267; these read GGGVI and SVGT. FAD-binding residues include D304 and A312.

It belongs to the class-I pyridine nucleotide-disulfide oxidoreductase family. In terms of assembly, homodimer. Requires FAD as cofactor.

The protein resides in the cytoplasm. The enzyme catalyses N(6)-[(R)-dihydrolipoyl]-L-lysyl-[protein] + NAD(+) = N(6)-[(R)-lipoyl]-L-lysyl-[protein] + NADH + H(+). Functionally, lipoamide dehydrogenase is a component of the alpha-ketoacid dehydrogenase complexes. The sequence is that of Dihydrolipoyl dehydrogenase (pdhD) from Acholeplasma laidlawii.